Here is a 266-residue protein sequence, read N- to C-terminus: Signal peptidase I (266 aa).

At 1-20 (MQTDNTKSNTNKTAKQEWGS) the chain is on the cytoplasmic side. A helical membrane pass occupies residues 21–41 (FVFVICIALLIRILIMEPFTV). The Periplasmic segment spans residues 42-266 (PTGSMKATIL…IFRNLYNTDV (225 aa)). Residues Ser-45 and Lys-108 contribute to the active site.

It belongs to the peptidase S26 family.

The protein localises to the cell inner membrane. The enzyme catalyses Cleavage of hydrophobic, N-terminal signal or leader sequences from secreted and periplasmic proteins.. This chain is Signal peptidase I (lepB), found in Rickettsia massiliae (strain Mtu5).